The chain runs to 478 residues: uncharacterized protein (478 aa).

Residues 2 to 120 enclose the RCK N-terminal domain; that stretch reads MNMITVIGFG…NIDKIINILE (119 aa).

This is an uncharacterized protein from Methanocaldococcus jannaschii (strain ATCC 43067 / DSM 2661 / JAL-1 / JCM 10045 / NBRC 100440) (Methanococcus jannaschii).